The sequence spans 429 residues: uncharacterized protein (429 aa).

Residues serine 116, aspartate 179, and histidine 206 each act as charge relay system in the active site.

This sequence belongs to the AB hydrolase 3 family.

The protein resides in the cytoplasm. It is found in the nucleus. This is an uncharacterized protein from Schizosaccharomyces pombe (strain 972 / ATCC 24843) (Fission yeast).